The sequence spans 182 residues: Oligoribonuclease (182 aa).

The 164-residue stretch at 8–171 folds into the Exonuclease domain; that stretch reads LIWIDLEMTG…DDIRESIKEL (164 aa). Tyrosine 129 is an active-site residue.

This sequence belongs to the oligoribonuclease family.

The protein localises to the cytoplasm. Functionally, 3'-to-5' exoribonuclease specific for small oligoribonucleotides. In Haemophilus influenzae (strain ATCC 51907 / DSM 11121 / KW20 / Rd), this protein is Oligoribonuclease (orn).